Consider the following 228-residue polypeptide: Ribosomal RNA small subunit methyltransferase G (228 aa).

S-adenosyl-L-methionine contacts are provided by residues Gly82, Leu87, 105 to 107 (DAT), 133 to 134 (VE), and Arg147.

This sequence belongs to the methyltransferase superfamily. RNA methyltransferase RsmG family.

The protein resides in the cytoplasm. Functionally, specifically methylates the N7 position of a guanine in 16S rRNA. In Pelodictyon phaeoclathratiforme (strain DSM 5477 / BU-1), this protein is Ribosomal RNA small subunit methyltransferase G.